The chain runs to 185 residues: Guanosine deaminase (185 aa).

One can recognise a CMP/dCMP-type deaminase domain in the interval 28–142; sequence DSDHKFLTQA…AAIAIGFDDF (115 aa). His-80 serves as a coordination point for Zn(2+). The active-site Proton donor is Glu-82. 2 residues coordinate Zn(2+): Cys-110 and Cys-113.

It belongs to the cytidine and deoxycytidylate deaminase family. In terms of tissue distribution, expressed in roots, leaves, flowers and siliques.

The protein resides in the cytoplasm. It is found in the nucleus. The catalysed reaction is guanosine + H2O + H(+) = xanthosine + NH4(+). Catalyzes the hydrolytic deamination of guanosine, producing xanthosine and ammonia. Deaminates exclusively guanosine and 2'-deoxyguanosine but no other aminated purines, pyrimidines, or pterines. Deamination of guanosine by GSDA is the only source of xanthosine production in Arabidopsis. The sequence is that of Guanosine deaminase from Arabidopsis thaliana (Mouse-ear cress).